A 406-amino-acid polypeptide reads, in one-letter code: Glutamyl-tRNA(Gln) amidotransferase subunit D (406 aa).

The Asparaginase/glutaminase domain occupies 68–390; that stretch reads KSISILATGG…EEFINVFNRN (323 aa). Residues Thr-78, Thr-152, Asp-153, and Lys-230 contribute to the active site.

The protein belongs to the asparaginase 1 family. GatD subfamily. Heterodimer of GatD and GatE.

It catalyses the reaction L-glutamyl-tRNA(Gln) + L-glutamine + ATP + H2O = L-glutaminyl-tRNA(Gln) + L-glutamate + ADP + phosphate + H(+). Allows the formation of correctly charged Gln-tRNA(Gln) through the transamidation of misacylated Glu-tRNA(Gln) in organisms which lack glutaminyl-tRNA synthetase. The reaction takes place in the presence of glutamine and ATP through an activated gamma-phospho-Glu-tRNA(Gln). The GatDE system is specific for glutamate and does not act on aspartate. This is Glutamyl-tRNA(Gln) amidotransferase subunit D from Thermoplasma volcanium (strain ATCC 51530 / DSM 4299 / JCM 9571 / NBRC 15438 / GSS1).